The primary structure comprises 342 residues: Oxygen-dependent coproporphyrinogen-III oxidase (342 aa).

Position 98 (serine 98) interacts with substrate. 2 residues coordinate a divalent metal cation: histidine 102 and histidine 112. The Proton donor role is filled by histidine 112. 114–116 contacts substrate; that stretch reads NYR. A divalent metal cation is bound by residues histidine 146 and histidine 176. The interval 266–301 is important for dimerization; it reads YVEFNLVWDRGTIFGLQTNGRTESILMSLPPLARWE.

Belongs to the aerobic coproporphyrinogen-III oxidase family. In terms of assembly, homodimer. It depends on a divalent metal cation as a cofactor.

It is found in the cytoplasm. The enzyme catalyses coproporphyrinogen III + O2 + 2 H(+) = protoporphyrinogen IX + 2 CO2 + 2 H2O. The protein operates within porphyrin-containing compound metabolism; protoporphyrin-IX biosynthesis; protoporphyrinogen-IX from coproporphyrinogen-III (O2 route): step 1/1. Functionally, involved in the heme and chlorophyll biosynthesis. Catalyzes the aerobic oxidative decarboxylation of propionate groups of rings A and B of coproporphyrinogen-III to yield the vinyl groups in protoporphyrinogen-IX. This Prochlorococcus marinus (strain MIT 9515) protein is Oxygen-dependent coproporphyrinogen-III oxidase.